A 103-amino-acid chain; its full sequence is MATYAIVKTGGKQYKVAVGDVVKVEKLDSEPGSNVSLPVALVVDGAKVTSDAAALAKVAVTGEVLEHTKGPKIRIHKFRNKTGYHKRQGHRQQLTVLKVTGIK.

The protein belongs to the bacterial ribosomal protein bL21 family. In terms of assembly, part of the 50S ribosomal subunit. Contacts protein L20.

Its function is as follows. This protein binds to 23S rRNA in the presence of protein L20. The protein is Large ribosomal subunit protein bL21 of Mycolicibacterium paratuberculosis (strain ATCC BAA-968 / K-10) (Mycobacterium paratuberculosis).